A 630-amino-acid chain; its full sequence is MDGFVQEWSNLPRSDNGLHMDQLVGELPTDGGFEPQTRARSNTWPCPRPENFVEPVDELDSTKASNQQLADPQQAMQNANAAKKNSSRRNAWGNLSYADLITHAIGSATDKRLTLSQIYEWMVQNVAYFKDKGDSNSSAGWKNSIRHNLSLHSRFMRVQNEGTGKSSWWMLNPDAKPGKSVRRRAASMETSRYEKRRGRAKKRVEALRQAGAVGLNDATPSPSSSVSEGLDHFPESPLHSGGFQLSPDFRQRASSNASSCGRLSPIRALDLEPDWGYSVDYQNTTMTQAQAQALDQLTGSMADELKLQNDMLQQQGFSAASGLPTQPPPPYQQQQQQQQQQAQQQSQLPQGYTLNGPVSAPGYNTLQPQAQQQQQQQQQQQQQQQQPQCLLHRSLNCGCLHSTRDGLSPNSVTTTMSPAYPNSEPSSDSLNTYSNSILLDAASDNGSLLVQQQQQQQQQQQQQQQQQQQLSSGLEGQCLEALNSEQIDEFNLENFQGGLECNVEELLQQEMIYDGLLDINIPLPAVNTNATNVILTNNSTNNSSSGCNISAGVQLSCSQLQAELQLQQQQQQQQQQQQQQQQQQQQQQQQLLLSNNNNNNNNSLELATQTATRVQYTQPSVVTSPPSWVH.

The tract at residues 1–45 (MDGFVQEWSNLPRSDNGLHMDQLVGELPTDGGFEPQTRARSNTWP) is disordered. Thr43 carries the post-translational modification Phosphothreonine; by PKB/AKT1. The fork-head DNA-binding region spans 92-198 (WGNLSYADLI…ETSRYEKRRG (107 aa)). Ser187 is subject to Phosphoserine; by PKB/AKT1. Residues 214–260 (GLNDATPSPSSSVSEGLDHFPESPLHSGGFQLSPDFRQRASSNASSC) are disordered. A compositionally biased stretch (polar residues) spans 218-227 (ATPSPSSSVS). Ser255 bears the Phosphoserine; by PKB/AKT1 mark. A phosphoserine mark is found at Ser258, Ser259, and Ser264. Disordered regions lie at residues 318–379 (SAAS…QQQQ) and 403–432 (TRDGLSPNSVTTTMSPAYPNSEPSSDSLNT). Composition is skewed to low complexity over residues 332 to 350 (QQQQQQQQQQAQQQSQLPQ) and 367 to 379 (QPQAQQQQQQQQQ). Polar residues-rich tracts occupy residues 408–417 (SPNSVTTTMS) and 423–432 (SEPSSDSLNT).

As to quaternary structure, interacts with melt.

It localises to the cytoplasm. The protein localises to the nucleus. Functionally, transcription factor involved in the regulation of the insulin signaling pathway. Consistently activates both the downstream target Thor\d4EBP and the feedback control target InR. Involved in negative regulation of the cell cycle, modulating cell growth and proliferation. In response to cellular stresses, such as nutrient deprivation or increased levels of reactive oxygen species, foxo is activated and inhibits growth through the action of target genes such as Thor. Foxo activated in the adult fat body can regulate lifespan in adults; an insulin peptide itself may function as one secondary messenger of insulin-regulated aging. Also regulates Lip4, homolog of human acid lipases, thereby acting as a key modulator of lipid metabolism by insulin signaling and integrates insulin responses to glucose and lipid homeostasis. The chain is Forkhead box protein O from Drosophila grimshawi (Hawaiian fruit fly).